The sequence spans 407 residues: Growth/differentiation factor 11 (407 aa).

Positions 1–24 (MVLAAPLLLGFLLLALELRPRGEA) are cleaved as a signal peptide. Positions 25–298 (AEGPAAAAAA…VLENTKRSRR (274 aa)) are excised as a propeptide. Asn94 carries N-linked (GlcNAc...) asparagine glycosylation. Disulfide bonds link Cys304/Cys314, Cys313/Cys372, Cys341/Cys404, and Cys345/Cys406.

It belongs to the TGF-beta family. Homodimer; disulfide-linked. Interacts directly with ACVR2B. Interacts directly with ACVR2A. Interacts with ACVR1B, TGFBR1 and ACVR1C in an ACVR2B-dependent manner. Interacts with FST isoform 2/FS-288. In terms of processing, synthesized as large precursor molecule that undergoes proteolytic cleavage by furin-like proteases. This produces an inactive form consisting of the mature C-terminal portion non-covalently bound to its cleaved N-terminal propeptide. Activation of the mature form requires additional cleavage of the propeptide by a tolloid-like metalloproteinase. In terms of tissue distribution, in the embryo, strong expression is seen in the palatal epithelia, including the medial edge epithelial and midline epithelial seam of the palatal shelves. Less pronounced expression is also seen throughout the palatal shelf and tongue mesenchyme.

Its subcellular location is the secreted. Secreted signal that acts globally to regulate anterior/posterior axial patterning during development. May play critical roles in patterning both mesodermal and neural tissues. It is required for proper vertebral patterning and orofacial development. Signals through activin receptors type-2, ACVR2A and ACVR2B, and activin receptors type-1, ACVR1B, ACVR1C and TGFBR1 leading to the phosphorylation of SMAD2 and SMAD3. The polypeptide is Growth/differentiation factor 11 (GDF11) (Homo sapiens (Human)).